A 480-amino-acid polypeptide reads, in one-letter code: Sulfate adenylyltransferase subunit 1 (480 aa).

The region spanning 30-248 is the tr-type G domain; that stretch reads KGLLRFLTCG…TVDVKKEASK (219 aa). Positions 39-46 are G1; the sequence is GSVDDGKS. 39 to 46 contributes to the GTP binding site; it reads GSVDDGKS. The segment at 97–101 is G2; that stretch reads GITID. Residues 118 to 121 form a G3 region; sequence DTPG. GTP is bound by residues 118-122 and 173-176; these read DTPGH and NKMD. Residues 173 to 176 form a G4 region; it reads NKMD. The G5 stretch occupies residues 211–213; that stretch reads SAL.

It belongs to the TRAFAC class translation factor GTPase superfamily. Classic translation factor GTPase family. CysN/NodQ subfamily. As to quaternary structure, heterodimer composed of CysD, the smaller subunit, and CysN.

It catalyses the reaction sulfate + ATP + H(+) = adenosine 5'-phosphosulfate + diphosphate. Its pathway is sulfur metabolism; hydrogen sulfide biosynthesis; sulfite from sulfate: step 1/3. Functionally, with CysD forms the ATP sulfurylase (ATPS) that catalyzes the adenylation of sulfate producing adenosine 5'-phosphosulfate (APS) and diphosphate, the first enzymatic step in sulfur assimilation pathway. APS synthesis involves the formation of a high-energy phosphoric-sulfuric acid anhydride bond driven by GTP hydrolysis by CysN coupled to ATP hydrolysis by CysD. This chain is Sulfate adenylyltransferase subunit 1, found in Photorhabdus laumondii subsp. laumondii (strain DSM 15139 / CIP 105565 / TT01) (Photorhabdus luminescens subsp. laumondii).